A 107-amino-acid polypeptide reads, in one-letter code: Hydrogenase expression/formation protein HoxL (107 aa).

Belongs to the HupF/HypC family.

The chain is Hydrogenase expression/formation protein HoxL (hoxL) from Cupriavidus necator (strain ATCC 17699 / DSM 428 / KCTC 22496 / NCIMB 10442 / H16 / Stanier 337) (Ralstonia eutropha).